A 271-amino-acid chain; its full sequence is Cytochrome b termination protein 1 (271 aa).

It localises to the mitochondrion. Involved in 5'-end processing of mitochondrial COB, 15S rRNA, and RPM1 transcript. May also have a role in 3'-end processing of the COB pre-mRNA. In Saccharomyces cerevisiae (strain ATCC 204508 / S288c) (Baker's yeast), this protein is Cytochrome b termination protein 1 (CBT1).